The chain runs to 537 residues: ATP synthase subunit alpha (537 aa).

174 to 181 (GDRQTGKT) contributes to the ATP binding site.

The protein belongs to the ATPase alpha/beta chains family. F-type ATPases have 2 components, CF(1) - the catalytic core - and CF(0) - the membrane proton channel. CF(1) has five subunits: alpha(3), beta(3), gamma(1), delta(1), epsilon(1). CF(0) has three main subunits: a(1), b(2) and c(9-12). The alpha and beta chains form an alternating ring which encloses part of the gamma chain. CF(1) is attached to CF(0) by a central stalk formed by the gamma and epsilon chains, while a peripheral stalk is formed by the delta and b chains.

It localises to the cell inner membrane. It catalyses the reaction ATP + H2O + 4 H(+)(in) = ADP + phosphate + 5 H(+)(out). Functionally, produces ATP from ADP in the presence of a proton gradient across the membrane. The alpha chain is a regulatory subunit. In Verminephrobacter eiseniae (strain EF01-2), this protein is ATP synthase subunit alpha.